The following is a 106-amino-acid chain: Vacuolar ATPase assembly integral membrane protein VMA21 homolog (106 aa).

Residues 1–26 are disordered; sequence MSNKNKKSGGAGNGAAQKQTRQQSHD. Residues 1-32 are Cytoplasmic-facing; the sequence is MSNKNKKSGGAGNGAAQKQTRQQSHDSQDYSS. The helical transmembrane segment at 33-53 threads the bilayer; it reads FKIVLFYCMLIVFLPVVTFFL. Topologically, residues 54–69 are lumenal; it reads LKGFVLDRFFSLSEVK. The chain crosses the membrane as a helical span at residues 70 to 90; the sequence is VNIASAVGAVVSLHIALGLYI. The Cytoplasmic segment spans residues 91-106; sequence YRAYFGATGSKAVKED.

This sequence belongs to the VMA21 family.

The protein localises to the endoplasmic reticulum membrane. The protein resides in the endoplasmic reticulum-Golgi intermediate compartment membrane. It is found in the cytoplasmic vesicle. Its subcellular location is the COPII-coated vesicle membrane. In terms of biological role, required for the assembly of the V0 complex of the vacuolar ATPase (V-ATPase) in the endoplasmic reticulum. The protein is Vacuolar ATPase assembly integral membrane protein VMA21 homolog of Drosophila ananassae (Fruit fly).